Here is an 832-residue protein sequence, read N- to C-terminus: Sodium/hydrogen exchanger 3 (832 aa).

The first 29 residues, 1 to 29 (MSGRGGCGPCWGLLLALVLALGALPWTQG), serve as a signal peptide directing secretion. Residues 30–50 (AEQEHHDEIQGFQIVTFKWHH) are Extracellular-facing. Residues 51–73 (VQDPYIIALWVLVASLAKIVFHL) traverse the membrane as a helical segment. Residues 74–81 (SHKVTSVV) are Cytoplasmic-facing. Residues 82–101 (PESALLIVLGLVLGGIVLAA) form a helical membrane-spanning segment. The Extracellular segment spans residues 102-110 (DHIASFTLT). A helical membrane pass occupies residues 111–128 (PTVFFFYLLPPIVLDAGY). At 129-131 (FMP) the chain is on the cytoplasmic side. A helical membrane pass occupies residues 132-167 (NRLFFSNLGSILLYAVVGTVWNAATTGLSLYGVFLS). 2 residues coordinate a 1,2-diacyl-sn-glycero-3-phospho-(1D-myo-inositol): glycine 140 and serine 141. Over 168 to 180 (GIMGELKIGLLDF) the chain is Extracellular. Residues 181–202 (LLFGSLIAAVDPVAVLAVFEEV) traverse the membrane as a helical segment. Topologically, residues 203-204 (HV) are cytoplasmic. Residues 205–236 (NEVLFIIVFGESLLNDAVTVVLYNVFQSFVTL) form a helical membrane-spanning segment. The Extracellular segment spans residues 237–243 (GGDKVTG). A helical transmembrane segment spans residues 244 to 278 (VDCVKGIVSFFVVSLGGTLVGVVFAFLLSLVTRFT). Topologically, residues 279 to 280 (KH) are cytoplasmic. Residues 281–303 (VRVIEPGFVFIISYLSYLTSEML) form a helical membrane-spanning segment. Over 304–305 (SL) the chain is Extracellular. Residues 306–322 (SSILAITFCGICCQKYV) form a helical membrane-spanning segment. Residues 323-329 (KANISEQ) are Cytoplasmic-facing. A helical transmembrane segment spans residues 330-358 (SATTVRYTMKMLASGAETIIFMFLGISAV). The Extracellular portion of the chain corresponds to 359–366 (DPLIWTWN). The chain crosses the membrane as a helical span at residues 367–388 (TAFVLLTLLFVSVFRAIGVVLQ). Residues 389–401 (TWLLNRYRMVQLE) are Cytoplasmic-facing. Methionine 397 contributes to the a 1,2-diacyl-sn-glycero-3-phospho-(1D-myo-inositol) binding site. Residues 402–425 (LIDQVVMSYGGLRGAVAFALVALL) form a helical membrane-spanning segment. Residues 426-432 (DGNKVKE) lie on the Extracellular side of the membrane. Residues 433-466 (KNLFVSTTIIVVFFTVIFQGLTIKPLVQWLKVKR) form a helical membrane-spanning segment. Residues 467–832 (SEHREPKLNE…GAEHPESTHM (366 aa)) lie on the Cytoplasmic side of the membrane. A 1,2-diacyl-sn-glycero-3-phospho-(1D-myo-inositol) is bound by residues glutamine 496, isoleucine 497, and histidine 499. Serine 554 and serine 562 each carry phosphoserine. The segment at 575–589 (RPSTVEASVSYLLRE) is interaction with EZR. Residues 590–667 (SASAVCLDMQ…RKRLESFKSA (78 aa)) form an interaction with NHERF4 region. Residues 591–696 (ASAVCLDMQS…AQKRRNSSVP (106 aa)) form an interaction with AHCYL1 region. Phosphoserine occurs at positions 592 and 607. Serine 663 carries the post-translational modification Phosphoserine; by SGK1. The tract at residues 664 to 706 (FKSAKLGLGQSKKATKHKRERERAQKRRNSSVPNGKLPLDSPA) is disordered. Positions 676–692 (KATKHKRERERAQKRRN) are enriched in basic residues. Residues serine 719, serine 813, and serine 816 each carry the phosphoserine modification.

The protein belongs to the monovalent cation:proton antiporter 1 (CPA1) transporter (TC 2.A.36) family. As to quaternary structure, homodimer. Found in the forms of complex and dynamic macromolecular complexes. Interacts with CHP1; this interaction increases trafficking and activity at the plasma membrane of SLC9A3. Interacts with CHP2 and SHANK2. Interacts with NHERF4 and interaction decreases in response to elevated calcium ion levels. Binds NHERF1 and NHERF2. Interacts with PDZK1 (via C-terminal PDZ domain). Interacts with AHCYL1; interaction is required for SLC9A3 activity. Interacts with EZR; interaction targets SLC9A3 to the apical membrane. Interacts with SNX27 (via PDZ domains); directs SLC9A3 membrane insertion from early endosomes to the plasma membrane. Phosphorylated by PKA, which inhibits activity. Phosphorylation at Ser-663 by SGK1 is associated with increased abundance at the cell membrane and activity. Phosphorylation at Ser-719 by CSNK2A1 regulates SLC9A3 activity through the formation of multiple signaling complexes. As to expression, intestinal and kidney specific. Most abundant in kidney cortex, followed equally by ileum and ascending colon, then kidney medulla and jejunum. Is absent from duodenum and descending colon.

Its subcellular location is the apical cell membrane. The protein localises to the cell membrane. It localises to the recycling endosome membrane. The protein resides in the early endosome membrane. The catalysed reaction is Na(+)(in) + H(+)(out) = Na(+)(out) + H(+)(in). Its activity is regulated as follows. Seems to switch between active and inactive modes in response to various stimuli. Activated directly or indirectly by membrane phosphatidylinositol (PIs). Regulated by a variety of auxiliary proteins, which facilitate the maturation, cell surface expression and function of the transporter. Inhibited specifically by the drug tenapanor. Plasma membrane Na(+)/H(+) antiporter. Exchanges intracellular H(+) ions for extracellular Na(+) in 1:1 stoichiometry, playing a key role in salt and fluid absorption and pH homeostasis. Major apical Na(+)/H(+) exchanger in kidney and intestine playing an important role in renal and intestine Na(+) absorption and blood pressure regulation. The chain is Sodium/hydrogen exchanger 3 (SLC9A3) from Oryctolagus cuniculus (Rabbit).